The following is a 540-amino-acid chain: Suppressor of tumorigenicity 7 protein-like (540 aa).

The next 4 helical transmembrane spans lie at 24–44 (WSWT…VYVL), 68–88 (FYVA…IFEW), 475–495 (LPFF…LAML), and 502–522 (LMGV…GFFA).

This sequence belongs to the ST7 family.

Its subcellular location is the membrane. This is Suppressor of tumorigenicity 7 protein-like (st7l) from Danio rerio (Zebrafish).